The chain runs to 638 residues: 1-deoxy-D-xylulose-5-phosphate synthase (638 aa).

Residues His-78 and 119–121 (AHS) contribute to the thiamine diphosphate site. Residue Asp-150 participates in Mg(2+) binding. Thiamine diphosphate-binding positions include 151–152 (GS), Asn-179, Tyr-288, and Glu-370. Residue Asn-179 participates in Mg(2+) binding.

Belongs to the transketolase family. DXPS subfamily. Homodimer. Mg(2+) serves as cofactor. Thiamine diphosphate is required as a cofactor.

It carries out the reaction D-glyceraldehyde 3-phosphate + pyruvate + H(+) = 1-deoxy-D-xylulose 5-phosphate + CO2. It functions in the pathway metabolic intermediate biosynthesis; 1-deoxy-D-xylulose 5-phosphate biosynthesis; 1-deoxy-D-xylulose 5-phosphate from D-glyceraldehyde 3-phosphate and pyruvate: step 1/1. Functionally, catalyzes the acyloin condensation reaction between C atoms 2 and 3 of pyruvate and glyceraldehyde 3-phosphate to yield 1-deoxy-D-xylulose-5-phosphate (DXP). The protein is 1-deoxy-D-xylulose-5-phosphate synthase of Brucella anthropi (strain ATCC 49188 / DSM 6882 / CCUG 24695 / JCM 21032 / LMG 3331 / NBRC 15819 / NCTC 12168 / Alc 37) (Ochrobactrum anthropi).